Here is a 35-residue protein sequence, read N- to C-terminus: Conotoxin Ca15a (35 aa).

Position 8 is a 4-hydroxyproline (proline 8).

Contains 4 disulfide bonds. As to expression, expressed by the venom duct.

It is found in the secreted. This is Conotoxin Ca15a from Conus caracteristicus (Characteristic cone).